Here is a 106-residue protein sequence, read N- to C-terminus: L-rhamnose mutarotase (106 aa).

Tyr20 is a substrate binding site. The active-site Proton donor is His24. Residues Tyr43 and 78–79 (WW) contribute to the substrate site.

Belongs to the rhamnose mutarotase family. In terms of assembly, homodimer.

Its subcellular location is the cytoplasm. It carries out the reaction alpha-L-rhamnose = beta-L-rhamnose. The protein operates within carbohydrate metabolism; L-rhamnose metabolism. Its function is as follows. Involved in the anomeric conversion of L-rhamnose. The protein is L-rhamnose mutarotase of Rhizobium etli (strain ATCC 51251 / DSM 11541 / JCM 21823 / NBRC 15573 / CFN 42).